Consider the following 368-residue polypeptide: Carbamoyl phosphate synthase small chain (368 aa).

Residues 1–178 (MKAVLGLEDG…GAAGAWKGSG (178 aa)) are CPSase. The L-glutamine site is built by S45, G230, and G232. The region spanning 182 to 368 (HAVVVDLGIK…KVVKVLGGGL (187 aa)) is the Glutamine amidotransferase type-1 domain. C257 serves as the catalytic Nucleophile. L-glutamine is bound by residues F258, Q261, N299, G301, and Y302. Catalysis depends on residues H342 and E344.

This sequence belongs to the CarA family. As to quaternary structure, composed of two chains; the small (or glutamine) chain promotes the hydrolysis of glutamine to ammonia, which is used by the large (or ammonia) chain to synthesize carbamoyl phosphate. Tetramer of heterodimers (alpha,beta)4.

The catalysed reaction is hydrogencarbonate + L-glutamine + 2 ATP + H2O = carbamoyl phosphate + L-glutamate + 2 ADP + phosphate + 2 H(+). It carries out the reaction L-glutamine + H2O = L-glutamate + NH4(+). The protein operates within amino-acid biosynthesis; L-arginine biosynthesis; carbamoyl phosphate from bicarbonate: step 1/1. It participates in pyrimidine metabolism; UMP biosynthesis via de novo pathway; (S)-dihydroorotate from bicarbonate: step 1/3. In terms of biological role, small subunit of the glutamine-dependent carbamoyl phosphate synthetase (CPSase). CPSase catalyzes the formation of carbamoyl phosphate from the ammonia moiety of glutamine, carbonate, and phosphate donated by ATP, constituting the first step of 2 biosynthetic pathways, one leading to arginine and/or urea and the other to pyrimidine nucleotides. The small subunit (glutamine amidotransferase) binds and cleaves glutamine to supply the large subunit with the substrate ammonia. The chain is Carbamoyl phosphate synthase small chain from Methanosarcina mazei (strain ATCC BAA-159 / DSM 3647 / Goe1 / Go1 / JCM 11833 / OCM 88) (Methanosarcina frisia).